The primary structure comprises 471 residues: 3-isopropylmalate dehydratase large subunit (471 aa).

C347, C407, and C410 together coordinate [4Fe-4S] cluster.

It belongs to the aconitase/IPM isomerase family. LeuC type 1 subfamily. In terms of assembly, heterodimer of LeuC and LeuD. [4Fe-4S] cluster is required as a cofactor.

It carries out the reaction (2R,3S)-3-isopropylmalate = (2S)-2-isopropylmalate. The protein operates within amino-acid biosynthesis; L-leucine biosynthesis; L-leucine from 3-methyl-2-oxobutanoate: step 2/4. Catalyzes the isomerization between 2-isopropylmalate and 3-isopropylmalate, via the formation of 2-isopropylmaleate. This chain is 3-isopropylmalate dehydratase large subunit, found in Acaryochloris marina (strain MBIC 11017).